Here is a 131-residue protein sequence, read N- to C-terminus: Large ribosomal subunit protein bL19 (131 aa).

It belongs to the bacterial ribosomal protein bL19 family.

In terms of biological role, this protein is located at the 30S-50S ribosomal subunit interface and may play a role in the structure and function of the aminoacyl-tRNA binding site. The protein is Large ribosomal subunit protein bL19 of Rhodopseudomonas palustris (strain BisA53).